The chain runs to 232 residues: Small ribosomal subunit protein uS3 (232 aa).

A KH type-2 domain is found at 39–107 (VRQYLTKELK…PAQINIAEVR (69 aa)).

The protein belongs to the universal ribosomal protein uS3 family. Part of the 30S ribosomal subunit. Forms a tight complex with proteins S10 and S14.

Binds the lower part of the 30S subunit head. Binds mRNA in the 70S ribosome, positioning it for translation. This is Small ribosomal subunit protein uS3 from Aliivibrio fischeri (strain MJ11) (Vibrio fischeri).